The primary structure comprises 139 residues: Thioredoxin 2 (139 aa).

A zinc finger spans residues 5–18 (CTHCQAINRIPDDR). Positions 26 to 139 (GRCGHDLFDG…PFDSWLNESL (114 aa)) constitute a Thioredoxin domain. A disulfide bridge connects residues Cys-64 and Cys-67.

It belongs to the thioredoxin family.

The protein resides in the cytoplasm. It catalyses the reaction [protein]-dithiol + NAD(+) = [protein]-disulfide + NADH + H(+). The enzyme catalyses [protein]-dithiol + NADP(+) = [protein]-disulfide + NADPH + H(+). Efficient electron donor for the essential enzyme ribonucleotide reductase. Is also able to reduce the interchain disulfide bridges of insulin. The chain is Thioredoxin 2 (trxC) from Escherichia coli O6:H1 (strain CFT073 / ATCC 700928 / UPEC).